Here is a 114-residue protein sequence, read N- to C-terminus: MANDRLRALEDVEKEIALVLQSAGTIVLELSKEKANASLLDRQLNQFQTSINRVESELSSQIRYLTQVATGQPHEGSTYSARKDCQMALNRAEYARVKLGELGRTCEMMLDPQT.

A coiled-coil region spans residues 28–61 (LELSKEKANASLLDRQLNQFQTSINRVESELSSQ).

Belongs to the Mediator complex subunit 11 family. In terms of assembly, component of the Mediator complex. In terms of tissue distribution, ubiquitously expressed at early stage of development. After fertilization expressed in head region as well as in lateral line primordium.

Its subcellular location is the nucleus. Functionally, component of the Mediator complex, a coactivator involved in the regulated transcription of nearly all RNA polymerase II-dependent genes. Mediator functions as a bridge to convey information from gene-specific regulatory proteins to the basal RNA polymerase II transcription machinery. Mediator is recruited to promoters by direct interactions with regulatory proteins and serves as a scaffold for the assembly of a functional pre-initiation complex with RNA polymerase II and the general transcription factors. In Danio rerio (Zebrafish), this protein is Mediator of RNA polymerase II transcription subunit 11 (med11).